Reading from the N-terminus, the 81-residue chain is uncharacterized protein (81 aa).

A disordered region spans residues 55-81 (LDKRNSNNKIEKSENTGENHDNNQDQK).

This is an uncharacterized protein from Thermoproteus tenax virus 1 (strain KRA1) (TTV1).